The primary structure comprises 71 residues: Long neurotoxin 1 (71 aa).

5 disulfides stabilise this stretch: C3–C20, C14–C41, C26–C30, C45–C56, and C57–C62.

This sequence belongs to the three-finger toxin family. Long-chain subfamily. Type II alpha-neurotoxin sub-subfamily. In terms of tissue distribution, expressed by the venom gland.

The protein localises to the secreted. Its function is as follows. Binds with high affinity to muscular (alpha-1/CHRNA1) and neuronal (alpha-7/CHRNA7) nicotinic acetylcholine receptor (nAChR) and hinders acetylcholine binding to the receptor, thereby impairing neuromuscular and neuronal transmission. The protein is Long neurotoxin 1 of Naja annulata annulata (Banded water cobra).